The sequence spans 608 residues: Kelch-like protein 10 (608 aa).

In terms of domain architecture, BTB spans 39–106; that stretch reads CDVVIKVNGF…AYTRTVPITP (68 aa). Kelch repeat units lie at residues 292–339, 340–386, 388–433, 434–480, 481–527, and 529–574; these read ILFA…YLKG, YVYI…VLSN, IYAM…TLYG, KVYI…AYGE, HVYA…VVDD, and LFVV…VVPG. S501 bears the Phosphoserine mark.

Self-associates. Interacts with CUL3; indicative for the participation in an E3 ubiquitin ligase complex. Testis specific.

Its subcellular location is the cytoplasm. The protein operates within protein modification; protein ubiquitination. In terms of biological role, may be a substrate-specific adapter of a CUL3-based E3 ubiquitin-protein ligase complex which mediates the ubiquitination and subsequent proteasomal degradation of target proteins during spermatogenesis. Required for male fertility. In Mus musculus (Mouse), this protein is Kelch-like protein 10 (Klhl10).